A 355-amino-acid chain; its full sequence is Methylthioribose-1-phosphate isomerase (355 aa).

Substrate is bound by residues 50 to 52 (RGA), R93, and Q198. D239 serves as the catalytic Proton donor. Position 249 to 250 (249 to 250 (NK)) interacts with substrate.

This sequence belongs to the eIF-2B alpha/beta/delta subunits family. MtnA subfamily. In terms of assembly, homodimer.

It carries out the reaction 5-(methylsulfanyl)-alpha-D-ribose 1-phosphate = 5-(methylsulfanyl)-D-ribulose 1-phosphate. The protein operates within amino-acid biosynthesis; L-methionine biosynthesis via salvage pathway; L-methionine from S-methyl-5-thio-alpha-D-ribose 1-phosphate: step 1/6. Its function is as follows. Catalyzes the interconversion of methylthioribose-1-phosphate (MTR-1-P) into methylthioribulose-1-phosphate (MTRu-1-P). The protein is Methylthioribose-1-phosphate isomerase of Geobacillus thermodenitrificans (strain NG80-2).